The sequence spans 89 residues: MCDRKAVIKNADMSEEMQQDSVECATQALEKYNIEKDIAAHIKKEFDKKYNPTWHCIVGRNFGSYVTHETKHFIYFYLGQVAILLFKSG.

Residue Lys-36 is modified to N6-acetyllysine. Residue Lys-43 forms a Glycyl lysine isopeptide (Lys-Gly) (interchain with G-Cter in SUMO2) linkage. Residues 67–89 (THETKHFIYFYLGQVAILLFKSG) form an interaction with ESR1 region. Ser-88 bears the Phosphoserine mark.

It belongs to the dynein light chain family. In terms of assembly, homodimer. Monomer; the monomeric form is incapable of binding to target proteins. The cytoplasmic dynein 1 complex consists of two catalytic heavy chains (HCs) and a number of non-catalytic subunits presented by intermediate chains (ICs), light intermediate chains (LICs) and light chains (LCs); the composition seems to vary in respect to the IC, LIC and LC composition. The heavy chain homodimer serves as a scaffold for the probable homodimeric assembly of the respective non-catalytic subunits. The ICs and LICs bind directly to the HC dimer and the LCs assemble on the IC dimer. Interacts with TXNDC17. Interacts with WWC1 and ESR1. The WWC1-DYNLL1 interaction is mandatory for the recruitment and transactivation functions of ESR1 or DYNLL1 to the target chromatin. Interacts with BCL2L11. Interacts with BCL2; the interaction is greatly enhanced in the nucleus and in mitochondria upon induction of apoptosis. Interacts with PAK1; the interaction requires dimeric DYNLL1. Interacts with MYZAP. Part of an astrin (SPAG5)-kinastrin (SKAP) complex containing KNSTRN, SPAG5, PLK1, DYNLL1 and SGO2. Interacts with ATMIN; this interaction inhibits ATMIN transcriptional activity and hence may play a role in a feedback loop whereby DYNLL1 inhibits transactivation of its own promoter by ATMIN. Interacts with NEK9 (not phosphorylated at 'Ser-944'). Interacts with BICD2. Interacts with BCAS1. Interacts with Basson/BSN. Interacts with HDAC6. Interacts with TPPP. Interacts with AMBRA1 (via TQT motifs); tethering AMBRA1 to the cytoskeleton. Interacts with FAM83D/CHICA (via C-terminus). Interacts with HMMR, SPAG5/Astrin and KNSTRN/Kinastrin. Interacts with TLK2. Interacts with NOS1. Interacts with WWC1, WWC2 and WWC3. Interacts with MRE11; inhibiting MRE11 homodimerization and activity. (Microbial infection) Interacts with bovine immunodeficiency virus Gag protein; this interaction is critical for intracellular microtubule-dependent viral genome transport. Phosphorylation at Ser-88 promotes recruitment to DNA double-strand breaks (DSBs) by TP53BP1 and ability to inhibit MRE11.

The protein resides in the cytoplasm. Its subcellular location is the cytoskeleton. It is found in the microtubule organizing center. It localises to the centrosome. The protein localises to the chromosome. The protein resides in the nucleus. Its subcellular location is the mitochondrion. Its function is as follows. Acts as one of several non-catalytic accessory components of the cytoplasmic dynein 1 complex that are thought to be involved in linking dynein to cargos and to adapter proteins that regulate dynein function. Cytoplasmic dynein 1 acts as a motor for the intracellular retrograde motility of vesicles and organelles along microtubules. May play a role in changing or maintaining the spatial distribution of cytoskeletal structures. In addition to its role in cytoskeleton and transport, acts as a protein-protein adapter, which inhibits and/or sequesters target proteins. Involved in the response to DNA damage by acting as a key regulator of DNA end resection: when phosphorylated at Ser-88, recruited to DNA double-strand breaks (DSBs) by TP53BP1 and acts by disrupting MRE11 dimerization, thereby inhibiting DNA end resection. In a subset of DSBs, DYNLL1 remains unphosphorylated and promotes the recruitment of the Shieldin complex. Binds and inhibits the catalytic activity of neuronal nitric oxide synthase/NOS1. Promotes transactivation functions of ESR1 and plays a role in the nuclear localization of ESR1. Regulates apoptotic activities of BCL2L11 by sequestering it to microtubules. Upon apoptotic stimuli the BCL2L11-DYNLL1 complex dissociates from cytoplasmic dynein and translocates to mitochondria and sequesters BCL2 thus neutralizing its antiapoptotic activity. The polypeptide is Dynein light chain 1, cytoplasmic (DYNLL1) (Bos taurus (Bovine)).